We begin with the raw amino-acid sequence, 1490 residues long: WD repeat-containing protein 7 (1490 aa).

WD repeat units lie at residues 17–56, 62–104, 156–199, 324–366, 404–443, 462–507, and 558–597; these read APTH…QINP, GHTA…CIEF, ISPD…SDMQ, LICP…DKQG, NEPL…IVQL, GHRN…MKHI, and RHLF…LDRC. Disordered regions lie at residues 761–783 and 911–945; these read DEEE…YRSS and GDHM…IVQG. The segment covering 768–782 has biased composition (basic and acidic residues); sequence IMRQRREESDPEYRS. S935 bears the Phosphoserine mark. The segment covering 936 to 945 has biased composition (polar residues); the sequence is PPTSSNIVQG. WD repeat units follow at residues 1351–1390 and 1392–1432; these read PAIC…CQTI and GHKG…LGSI. S1456 bears the Phosphoserine mark.

The sequence is that of WD repeat-containing protein 7 (WDR7) from Homo sapiens (Human).